The sequence spans 509 residues: Maturase K (509 aa).

It belongs to the intron maturase 2 family. MatK subfamily.

Its subcellular location is the plastid. It is found in the chloroplast. Usually encoded in the trnK tRNA gene intron. Probably assists in splicing its own and other chloroplast group II introns. The sequence is that of Maturase K from Portulaca oleracea (Common purslane).